The sequence spans 461 residues: Squalene synthase BSS (461 aa).

NADP(+) contacts are provided by Arg51 and Arg76. Mg(2+) contacts are provided by Asp79, Glu82, and Asp83. The NADP(+) site is built by Arg219, Lys322, and Arg324. Residues 430–450 (VTQHWWSILIFLISIAVFFIP) form a helical membrane-spanning segment.

This sequence belongs to the phytoene/squalene synthase family. Mg(2+) serves as cofactor.

It localises to the endoplasmic reticulum membrane. It carries out the reaction 2 (2E,6E)-farnesyl diphosphate + NADPH + H(+) = squalene + 2 diphosphate + NADP(+). The enzyme catalyses 2 (2E,6E)-farnesyl diphosphate + NADH + H(+) = squalene + 2 diphosphate + NAD(+). Functionally, converts farnesyl diphosphate (FPP) into squalene, a precursor for sterol biosynthesis in eukaryotes. Does not possess botryococcene synthase activity. The polypeptide is Squalene synthase BSS (Botryococcus braunii (Green alga)).